A 2871-amino-acid chain; its full sequence is Fibrillin-1 (2871 aa).

The N-terminal stretch at 1–24 (MRRGRLLEVALGFTVLLASYTSHR) is a signal peptide. A propeptide spanning residues 25 to 44 (AEANLEAGNGKETRASRAKR) is cleaved from the precursor. Over residues 29 to 39 (LEAGNGKETRA) the composition is skewed to basic and acidic residues. Positions 29 to 49 (LEAGNGKETRASRAKRRGGGG) are disordered. Residues 45–81 (RGGGGHDALKGPNVCGSRYNAYCCPGWKTLPGGNQCI) form a fibrillin unique N-terminal (FUN) domain region. The segment at 45-450 (RGGGGHDALK…PPRVLPVNVT (406 aa)) is N-terminal domain. Intrachain disulfides connect cysteine 59-cysteine 68, cysteine 67-cysteine 80, cysteine 85-cysteine 94, cysteine 89-cysteine 100, cysteine 102-cysteine 111, cysteine 119-cysteine 129, cysteine 123-cysteine 134, cysteine 136-cysteine 145, cysteine 150-cysteine 160, cysteine 154-cysteine 166, and cysteine 168-cysteine 177. EGF-like domains lie at 81–112 (IVPICRHSCGDGFCSRPNMCTCPSGQIAPSCG), 115–146 (SIQHCNIRCMNGGSCSDDHCLCQKGYIGTHCG), and 147–178 (QPVCESGCLNGGRCVAPNRCACTYGFTGPQCE). The interval 119–329 (CNIRCMNGGS…YTSPDGTRCI (211 aa)) is interaction with MFAP4. Residues 184–236 (GPCFTVVSNQMCQGQLSGIVCTKTLCCATVGRAWGHPCEMCPAQPHPCRRGFI) enclose the TB 1 domain. The interval 195 to 221 (CQGQLSGIVCTKTLCCATVGRAWGHPC) is hybrid domain 1. The EGF-like 4; calcium-binding domain occupies 246–287 (DVDECQAIPGLCQGGNCINTVGSFECKCPAGHKFNEVSQKCE). 6 cysteine pairs are disulfide-bonded: cysteine 250–cysteine 262, cysteine 257–cysteine 271, cysteine 273–cysteine 286, cysteine 292–cysteine 304, cysteine 299–cysteine 313, and cysteine 315–cysteine 328. Residue serine 268 is glycosylated (O-linked (Glc) serine). The EGF-like 5; calcium-binding domain maps to 288–329 (DIDECSTIPGICDGGECTNTVSSYFCKCPPGFYTSPDGTRCI). The TB 2 domain occupies 334–389 (GYCYTALTNGRCSNQLPQSITKMQCCCDVGRCWSPGVTVTPEMCPIRATEDFNKLC). A glycan (N-linked (GlcNAc...) asparagine) is linked at asparagine 448. Residues 449-489 (VTDYCQLFRYLCHNGRCIPTPGSYRCECNKGFQLDLRGECI) enclose the EGF-like 6 domain. 15 disulfide bridges follow: cysteine 453-cysteine 465, cysteine 460-cysteine 474, cysteine 476-cysteine 488, cysteine 494-cysteine 504, cysteine 499-cysteine 513, cysteine 515-cysteine 528, cysteine 534-cysteine 546, cysteine 541-cysteine 555, cysteine 557-cysteine 570, cysteine 576-cysteine 587, cysteine 582-cysteine 596, cysteine 598-cysteine 611, cysteine 617-cysteine 628, cysteine 623-cysteine 637, and cysteine 639-cysteine 652. The O-linked (Glc) serine glycan is linked to serine 471. Positions 490 to 529 (DVDECEKNPCAGGECINNQGSYTCQCRPGYQSTLTRTECR) constitute an EGF-like 7; calcium-binding domain. Serine 510 is a glycosylation site (O-linked (Glc) serine). The region spanning 530–571 (DIDECLQNGRICNNGRCINTDGSFHCVCNAGFHVTRDGKNCE) is the EGF-like 8; calcium-binding domain. The EGF-like 9; calcium-binding domain maps to 572–612 (DMDECSIRNMCLNGMCINEDGSFKCICKPGFQLASDGRYCK). The 41-residue stretch at 613 to 653 (DINECETSGICMNGRCVNTDGSYRCECFPGLAVGLDGRVCV) folds into the EGF-like 10; calcium-binding domain. The 53-residue stretch at 659–711 (STCYGGYKRGQCVKPLFGAVTKSECCCASTEYAFGEPCQPCPSQNSAEYQALC) folds into the TB 3 domain. Residues 723–764 (DINECALDPDICPNGICENLRGTYKCICNSGYEVDSTGKNCV) form the EGF-like 11; calcium-binding domain. Cystine bridges form between cysteine 727–cysteine 739, cysteine 734–cysteine 748, cysteine 750–cysteine 763, cysteine 769–cysteine 781, cysteine 776–cysteine 790, cysteine 792–cysteine 805, cysteine 811–cysteine 821, cysteine 816–cysteine 830, cysteine 832–cysteine 845, cysteine 853–cysteine 875, cysteine 862–cysteine 887, cysteine 876–cysteine 890, cysteine 896–cysteine 908, cysteine 914–cysteine 926, cysteine 921–cysteine 935, and cysteine 937–cysteine 950. In terms of domain architecture, EGF-like 12; calcium-binding spans 765–806 (DINECVLNSLLCDNGQCRNTPGSFVCTCPKGFIYKPDLKTCE). The region spanning 807–846 (DIDECESSPCINGVCKNSPGSFICECSSESTLDPTKTICI) is the EGF-like 13; calcium-binding domain. The TB 4 domain maps to 851–902 (GTCWQTIIDGRCEININGATLKSQCCSSLGAAWGSPCTPCQVDPICGKGYSR). The hybrid domain 2 stretch occupies residues 862-887 (CEININGATLKSQCCSSLGAAWGSPC). Residues 910–951 (DIDECEVFPGVCKNGLCVNSKGSFKCQCPNGMTLDATGRICL) enclose the EGF-like 14; calcium-binding domain. The TB 5 domain occupies 956 to 1008 (ETCFLRYEDEECTLPVVGRHRMDACCCSVGAAWGTEECEECPPRNTPEYEELC). Positions 1028–1069 (DINECKMIPNLCTHGKCRNTIGSFKCRCDSGFALDSEERNCI) constitute an EGF-like 15; calcium-binding domain. Intrachain disulfides connect cysteine 1032–cysteine 1044, cysteine 1039–cysteine 1053, cysteine 1055–cysteine 1068, cysteine 1074–cysteine 1086, cysteine 1081–cysteine 1095, cysteine 1097–cysteine 1111, cysteine 1117–cysteine 1129, cysteine 1124–cysteine 1138, cysteine 1140–cysteine 1153, cysteine 1159–cysteine 1171, cysteine 1201–cysteine 1212, cysteine 1208–cysteine 1221, cysteine 1223–cysteine 1236, cysteine 1242–cysteine 1254, cysteine 1249–cysteine 1263, cysteine 1265–cysteine 1278, cysteine 1284–cysteine 1296, cysteine 1291–cysteine 1305, cysteine 1307–cysteine 1320, cysteine 1326–cysteine 1339, cysteine 1333–cysteine 1348, cysteine 1350–cysteine 1361, cysteine 1367–cysteine 1380, cysteine 1374–cysteine 1389, cysteine 1391–cysteine 1402, cysteine 1408–cysteine 1420, cysteine 1415–cysteine 1429, cysteine 1450–cysteine 1461, cysteine 1456–cysteine 1470, cysteine 1472–cysteine 1485, cysteine 1491–cysteine 1502, cysteine 1497–cysteine 1511, cysteine 1513–cysteine 1526, cysteine 1534–cysteine 1562, cysteine 1549–cysteine 1574, cysteine 1563–cysteine 1577, cysteine 1564–cysteine 1589, cysteine 1610–cysteine 1622, cysteine 1617–cysteine 1631, cysteine 1633–cysteine 1646, cysteine 1652–cysteine 1663, cysteine 1658–cysteine 1672, and cysteine 1674–cysteine 1687. Positions 1070–1112 (DIDECRISPDLCGRGQCVNTPGDFECKCDEGYESGFMMMKNCM) constitute an EGF-like 16; calcium-binding domain. Positions 1113–1154 (DIDECQRDPLLCRGGVCLNTEGSYRCECPSGHQMSPNISACI) constitute an EGF-like 17; calcium-binding domain. Residue serine 1135 is glycosylated (O-linked (Glc) serine). A glycan (N-linked (GlcNAc...) asparagine) is linked at asparagine 1149. Residues 1155–1196 (DINECELSAHLCPHGRCVNLIGKYQRARNPGYHSTPDRLFCV) enclose the EGF-like 18; calcium-binding domain. Residues 1197-1237 (DIDECSIMNGGCETFCTNSEGSYECSCQPGFALMPDQRSCT) enclose the EGF-like 19; calcium-binding domain. Serine 1218 carries an O-linked (Glc) serine glycan. One can recognise an EGF-like 20; calcium-binding domain in the interval 1238–1279 (DIDECEDNPNICDGGQCTNIPGEYRCLCYDGFMASEDMKTCV). The 42-residue stretch at 1280–1321 (DVNECDLNPNICLSGTCENTKGSFICHCDMGYSGKKGKTGCT) folds into the EGF-like 21; calcium-binding domain. Serine 1302 carries an O-linked (Glc) serine glycan. Residues 1322 to 1362 (DINECEIGAHNCDRHAVCTNTAGSFNCSCSPGWIGDGIKCT) enclose the EGF-like 22; calcium-binding domain. A glycan (O-linked (Glc) serine) is linked at serine 1345. N-linked (GlcNAc...) asparagine glycosylation is present at asparagine 1347. The EGF-like 23; calcium-binding domain occupies 1363-1403 (DLDECSNGTHMCSQHADCKNTMGSYRCLCKEGYTGDGFTCA). Asparagine 1369 carries N-linked (GlcNAc...) asparagine glycosylation. O-linked (Glc) serine glycosylation occurs at serine 1386. One can recognise an EGF-like 24; calcium-binding domain in the interval 1404–1445 (DLDECSENVKLCGNVQCLYAPGGYHCEYDMGFVPSADRKSCV). Residues 1446–1486 (DSDECSLPNICVFGTCHNLPGLFRCECEIGYELDRSGGNCT) form the EGF-like 25; calcium-binding domain. N-linked (GlcNAc...) asparagine glycosylation occurs at asparagine 1484. The 41-residue stretch at 1487–1527 (DVNECLEPPTCISGNCVNTPGSYTCVCPPDFELNPTRVGCV) folds into the EGF-like 26; calcium-binding domain. Serine 1508 is a glycosylation site (O-linked (Glc) serine). The tract at residues 1528–2731 (DTRSGNCYLD…GYPKRGRKRR (1204 aa)) is C-terminal domain. Residues 1532–1589 (GNCYLDVRPRGDNGDTACSNEIGVGVSKASCCCSLGKAWGTPCEQCPPVNTSEYKILC) form the TB 6 domain. Residues 1541-1543 (RGD) carry the Cell attachment site motif. An N-linked (GlcNAc...) asparagine glycan is attached at asparagine 1581. The EGF-like 27; calcium-binding domain occupies 1606–1647 (DIDECQELPGLCQGGKCINTFGSFQCRCPTGYYLNEDTRVCD). O-linked (Glc) serine glycosylation is present at serine 1628. In terms of domain architecture, EGF-like 28; calcium-binding spans 1648–1688 (DVNECETPGICGPGTCYNTVGNYTCICPPDYMQVNGGNNCM). Asparagine 1669 carries N-linked (GlcNAc...) asparagine glycosylation. The 56-residue stretch at 1693–1748 (SLCYRNYYADNQTCDGELLFNMTKKMCCCSYNIGRAWNKPCEQCPIPSTDEFATLC) folds into the TB 7 domain. N-linked (GlcNAc...) asparagine glycans are attached at residues asparagine 1703 and asparagine 1713. The EGF-like 29; calcium-binding domain occupies 1766-1807 (DIDECREIPGVCENGVCINMVGSFRCECPVGFFYNDKLLVCE). Disulfide bonds link cysteine 1770–cysteine 1782, cysteine 1777–cysteine 1791, cysteine 1793–cysteine 1806, cysteine 1812–cysteine 1824, cysteine 1818–cysteine 1833, cysteine 1835–cysteine 1847, cysteine 1853–cysteine 1865, cysteine 1860–cysteine 1874, cysteine 1876–cysteine 1889, cysteine 1895–cysteine 1905, cysteine 1900–cysteine 1914, cysteine 1916–cysteine 1928, cysteine 1934–cysteine 1947, cysteine 1942–cysteine 1956, cysteine 1958–cysteine 1971, cysteine 1977–cysteine 1989, cysteine 1984–cysteine 1998, cysteine 2000–cysteine 2011, cysteine 2017–cysteine 2029, cysteine 2024–cysteine 2038, cysteine 2040–cysteine 2053, cysteine 2061–cysteine 2083, cysteine 2070–cysteine 2096, cysteine 2084–cysteine 2099, cysteine 2085–cysteine 2111, cysteine 2131–cysteine 2142, cysteine 2137–cysteine 2151, cysteine 2153–cysteine 2164, cysteine 2170–cysteine 2181, cysteine 2176–cysteine 2190, cysteine 2192–cysteine 2204, cysteine 2210–cysteine 2221, cysteine 2217–cysteine 2230, cysteine 2232–cysteine 2245, cysteine 2251–cysteine 2265, cysteine 2258–cysteine 2274, cysteine 2276–cysteine 2289, cysteine 2295–cysteine 2307, cysteine 2302–cysteine 2316, and cysteine 2318–cysteine 2331. Residues 1808–1848 (DIDECQNGPVCQRNAECINTAGSYRCDCKPGYRFTSTGQCN) enclose the EGF-like 30; calcium-binding domain. Residue serine 1830 is glycosylated (O-linked (Glc) serine). The EGF-like 31; calcium-binding domain occupies 1849–1890 (DRNECQEIPNICSHGQCIDTVGSFYCLCHTGFKTNADQTMCL). Serine 1871 is a glycosylation site (O-linked (Glc) serine). The EGF-like 32; calcium-binding domain occupies 1891–1929 (DINECERDACGNGTCRNTIGSFNCRCNHGFILSHNNDCI). An N-linked (GlcNAc...) asparagine glycan is attached at asparagine 1902. A glycan (O-linked (Glc) serine) is linked at serine 1911. One can recognise an EGF-like 33; calcium-binding domain in the interval 1930–1972 (DVDECATGNGNLCRNGQCINTVGSFQCQCNEGYEVAPDGRTCV). The O-linked (Glc) serine glycan is linked to serine 1953. The 40-residue stretch at 1973–2012 (DINECLLEPGKCAPGTCQNLDGSYRCICPPGYSLQNDKCE) folds into the EGF-like 34; calcium-binding domain. Residues 2013 to 2054 (DIDECVEEPEICALGTCSNTEGSFKCLCPDGFSLSSTGRRCQ) form the EGF-like 35; calcium-binding domain. Serine 2035 carries O-linked (Glc) serine glycosylation. The TB 8 domain occupies 2059-2111 (SYCYAKFEGGKCSSPKSRNHSKQECCCALKGEGWGDPCELCPTEPDEAFRQIC). Residue asparagine 2077 is glycosylated (N-linked (GlcNAc...) asparagine). In terms of domain architecture, EGF-like 36; calcium-binding spans 2127 to 2165 (DMDECKEPDVCKHGQCINTDGSYRCECPFGYILEGNECV). A glycan (O-linked (Glc) serine) is linked at serine 2148. The region spanning 2166 to 2205 (DTDECSVGNPCGNGTCKNVIGGFECTCEEGFEPGPMMTCE) is the EGF-like 37; calcium-binding domain. N-linked (GlcNAc...) asparagine glycosylation is present at asparagine 2178. Residues 2206-2246 (DINECAQNPLLCAFRCVNTYGSYECKCPTGYVLREDRRMCK) enclose the EGF-like 38; calcium-binding domain. An O-linked (Glc) serine glycan is attached at serine 2227. One can recognise an EGF-like 39; calcium-binding domain in the interval 2247 to 2290 (DEDECEEGKHDCAEKQMECKNLIGMYICICGPGYQRRPDGEGCV). The EGF-like 40; calcium-binding domain occupies 2291–2332 (DENECQTKPGICENGRCLNTRGSYTCECNDGFTASPTQDECL). Serine 2313 carries an O-linked (Glc) serine glycan. The TB 9 domain occupies 2337–2390 (GYCFTEVLQNMCQIGSSNRNPVTKSECCCDGGRGWGPHCEICPFQGTVAFKKLC). The EGF-like 41; calcium-binding domain occupies 2402–2443 (DIDECKVIHDVCRNGECINDRGSYHCICKTGYTPDITGTACV). Disulfide bonds link cysteine 2406-cysteine 2418, cysteine 2413-cysteine 2427, cysteine 2429-cysteine 2442, cysteine 2448-cysteine 2459, cysteine 2455-cysteine 2468, cysteine 2470-cysteine 2483, cysteine 2489-cysteine 2500, cysteine 2496-cysteine 2509, cysteine 2511-cysteine 2522, cysteine 2528-cysteine 2541, cysteine 2535-cysteine 2550, cysteine 2552-cysteine 2565, cysteine 2571-cysteine 2581, cysteine 2577-cysteine 2590, cysteine 2592-cysteine 2605, cysteine 2611-cysteine 2622, cysteine 2617-cysteine 2631, cysteine 2633-cysteine 2646, cysteine 2652-cysteine 2663, cysteine 2659-cysteine 2672, and cysteine 2674-cysteine 2686. An EGF-like 42; calcium-binding domain is found at 2444–2484 (DLNECNQAPKPCNFICKNTEGSYQCSCPKGYILQEDGRSCK). Residue serine 2465 is glycosylated (O-linked (Glc) serine). The EGF-like 43; calcium-binding domain occupies 2485 to 2523 (DLDECATKQHNCQFLCVNTIGSFACKCPPGFTQHHTACI). The EGF-like 44; calcium-binding domain maps to 2524 to 2566 (DNNECTSDINLCGAKGICQNTPGSFTCECQRGFSLDQSGASCE). A glycan (O-linked (Glc) serine) is linked at serine 2547. In terms of domain architecture, EGF-like 45; calcium-binding spans 2567–2606 (DVDECEGNHRCQHGCQNIIGGYRCSCPQGYLQHYQWNQCV). An EGF-like 46; calcium-binding domain is found at 2607-2647 (DENECLSAHICGGASCHNTLGSYKCMCPAGFQYEQFSGGCQ). An O-linked (Glc) serine glycan is attached at serine 2628. The EGF-like 47; calcium-binding domain occupies 2648–2687 (DINECGSSQAPCSYGCSNTEGGYLCGCPPGYFRIGQGHCV). Residues serine 2702 and serine 2709 each carry the phosphoserine modification. N-linked (GlcNAc...) asparagine glycosylation is found at asparagine 2734, asparagine 2750, and asparagine 2767.

This sequence belongs to the fibrillin family. In terms of assembly, interacts with COL16A1. Interacts with integrin alpha-V/beta-3. Interacts with ADAMTS10; this interaction promotes microfibril assembly. Interacts with THSD4; this interaction promotes fibril formation. Interacts (via N-terminal domain) with FBLN2 and FBLN5. Interacts with ELN. Forms a ternary complex with ELN and FBLN2 or FBLN5 and a significant interaction with ELN seen only in the presence of FBLN2 or FBLN5. Interacts (via N-terminal domain) with LTBP2 (via C-terminal domain) in a Ca(+2)-dependent manner. Interacts (via N-terminal domain) with LTBP1 (via C-terminal domain). Interacts with integrins ITGA5:ITGB1, ITGAV:ITGB3 and ITGAV:ITGB6. Interacts (via N-terminal domain) with BMP2, BMP4, BMP7, BMP10 and GDF5. Interacts (via N-terminal domain) with MFAP2 and MFAP5. Interacts with ADAMTSL5. Interacts with MFAP4. Interacts (via N-terminal domain) with TNFSF11 in a Ca(+2)-dependent manner. Interacts (via N-terminal domain) with EFEMP2; this interaction inhibits EFEMP2 binding to LOX and ELN. Cleavage of N- and C-terminus by furin is required for incorporation into the extracellular matrix and assembly into microfibrils. The C-terminus, which corresponds to the Asprosin chain, was initially thought to constitute a propeptide. Fibrillin-1 and Asprosin chains are still linked together during the secretion from cells, but are subsequently separated by furin, an essential step for incorporation of Fibrillin-1 into the nascent microfibrils. In terms of processing, forms intermolecular disulfide bonds either with other fibrillin-1 molecules or with other components of the microfibrils. Post-translationally, O-glycosylated on serine residues by POGLUT2 and POGLUT3 which is necessary for efficient protein secretion.

The protein resides in the secreted. It is found in the extracellular space. Its subcellular location is the extracellular matrix. In terms of biological role, structural component of the 10-12 nm diameter microfibrils of the extracellular matrix, which conveys both structural and regulatory properties to load-bearing connective tissues. Fibrillin-1-containing microfibrils provide long-term force bearing structural support. In tissues such as the lung, blood vessels and skin, microfibrils form the periphery of the elastic fiber, acting as a scaffold for the deposition of elastin. In addition, microfibrils can occur as elastin-independent networks in tissues such as the ciliary zonule, tendon, cornea and glomerulus where they provide tensile strength and have anchoring roles. Fibrillin-1 also plays a key role in tissue homeostasis through specific interactions with growth factors, such as the bone morphogenetic proteins (BMPs), growth and differentiation factors (GDFs) and latent transforming growth factor-beta-binding proteins (LTBPs), cell-surface integrins and other extracellular matrix protein and proteoglycan components. Regulates osteoblast maturation by controlling TGF-beta bioavailability and calibrating TGF-beta and BMP levels, respectively. Negatively regulates osteoclastogenesis by binding and sequestering an osteoclast differentiation and activation factor TNFSF11. This leads to disruption of TNFSF11-induced Ca(2+) signaling and impairment of TNFSF11-mediated nuclear translocation and activation of transcription factor NFATC1 which regulates genes important for osteoclast differentiation and function. Mediates cell adhesion via its binding to cell surface receptors integrins ITGAV:ITGB3 and ITGA5:ITGB1. Binds heparin and this interaction plays an important role in the assembly of microfibrils. Hormone that targets the liver to increase plasma glucose levels. Secreted by white adipose tissue and circulates in the plasma. Acts in response to fasting and promotes blood glucose elevation by binding to the surface of hepatocytes. Promotes hepatocyte glucose release by activating the protein kinase A activity in the liver, resulting in rapid glucose release into the circulation. The sequence is that of Fibrillin-1 from Sus scrofa (Pig).